The chain runs to 303 residues: Phytochrome-associated serine/threonine-protein phosphatase (303 aa).

Residues aspartate 50, histidine 52, aspartate 78, and asparagine 110 each coordinate Zn(2+). Histidine 111 serves as the catalytic Proton donor. Zn(2+) contacts are provided by histidine 160 and histidine 234.

Belongs to the PPP phosphatase family. PP-6 (PP-V) subfamily. Interacts with PHYA and PHYB, mostly when they are phosphorylated and in Pfr forms. Zn(2+) serves as cofactor. Mostly expressed in flowers and stems.

The protein resides in the cytoplasm. It carries out the reaction O-phospho-L-seryl-[protein] + H2O = L-seryl-[protein] + phosphate. The catalysed reaction is O-phospho-L-threonyl-[protein] + H2O = L-threonyl-[protein] + phosphate. Functionally, catalytic subunit of protein phosphatase 6 (PP6). Dephosphorylates phosphorylated phytochromes, with a preference toward Pfr forms. Plays a major role in the photoperiodic control of flowering time in long days by modulating phytochrome signals in flowering time control. The polypeptide is Phytochrome-associated serine/threonine-protein phosphatase (Pisum sativum (Garden pea)).